Consider the following 706-residue polypeptide: Putative pentatricopeptide repeat-containing protein At3g47840 (706 aa).

PPR repeat units lie at residues 39 to 69 (VKFD…MPHG), 70 to 104 (DIVS…DHAV), 107 to 141 (DTSV…SLLS), 142 to 172 (SVYV…MPFR), 173 to 203 (NAVT…MSRS), 208 to 242 (DTYT…GFVT), 243 to 273 (TLCV…MSER), 274 to 308 (DVVS…QVPP), 309 to 343 (NEQT…GLND), 344 to 374 (SLSV…MRCR), 375 to 409 (DIIS…GTKP), 410 to 444 (TDFA…GLEQ), 445 to 475 (NSTV…TDRD), 476 to 510 (DIVS…GFRP), 511 to 541 (DSVT…MQET), and 547 to 577 (AKEH…MSWK). The tract at residues 582 to 657 (VWTTLLIACK…EPGWSSIKIK (76 aa)) is type E motif. The tract at residues 658–688 (DCVSAFVSGDRFHPQSEDIYNILELAVSGAE) is type E(+) motif.

This sequence belongs to the PPR family. PCMP-E subfamily.

The chain is Putative pentatricopeptide repeat-containing protein At3g47840 (PCMP-E43) from Arabidopsis thaliana (Mouse-ear cress).